Consider the following 275-residue polypeptide: 6-deoxy-6-sulfo-D-fructose transketolase subunit SqwG (275 aa).

This sequence belongs to the transketolase family. In terms of assembly, forms a complex with SqwH. Thiamine diphosphate is required as a cofactor.

The enzyme catalyses 6-deoxy-6-sulfo-D-fructose + D-glyceraldehyde 3-phosphate = 4-deoxy-4-sulfo-D-erythrose + D-xylulose 5-phosphate. It carries out the reaction 4-deoxy-4-sulfo-D-erythrulose + D-glyceraldehyde 3-phosphate = sulfoacetaldehyde + D-xylulose 5-phosphate. Part of the sulfo-TK pathway, a D-sulfoquinovose degradation pathway that produces 2-hydroxyethane-1-sulfonate (isethionate). Catalyzes two steps of the pathway: the formation of 4-deoxy-4-sulfoerythrose (SE) and xylulose 5-phosphate from 6-deoxy-6-sulfo-D-fructose (SF) and glyceraldehyde 3-phosphate, and the formation of sulfoacetaldehyde (SA) and xylulose 5-phosphate from 4-deoxy-4-sulfo-D-erythrulose (SEu) and glyceraldehyde 3-phosphate. The sequence is that of 6-deoxy-6-sulfo-D-fructose transketolase subunit SqwG from Clostridium sp. (strain MSTE9).